Consider the following 640-residue polypeptide: Endoglucanase 2 (640 aa).

The N-terminal stretch at 1–34 (MARGGGAAGVSMAHHLGIALVVLVFAAMAQVARG) is a signal peptide. D93 functions as the Nucleophile in the catalytic mechanism. Catalysis depends on residues H428, D480, and E489. Residues 512-640 (RARGRLGQSL…DVWVTGYKLV (129 aa)) constitute a propeptide, removed in mature form. An N-linked (GlcNAc...) asparagine glycan is attached at N528.

Belongs to the glycosyl hydrolase 9 (cellulase E) family. As to expression, expressed in roots and flowers.

It is found in the secreted. The catalysed reaction is Endohydrolysis of (1-&gt;4)-beta-D-glucosidic linkages in cellulose, lichenin and cereal beta-D-glucans.. Functionally, hydrolyzes 1,4-beta-glycosyl linkages of 1,4-beta-glucans and 1,3-1,4-beta-glucans. Possesses broad substrate specificity for hemicelluloses of type II cell walls. Substrate preference is carboxymethyl-cellulose &gt; 1,3-1,4-beta-glucan &gt; lichenan &gt; arabinoxylan &gt; phospho-swollen cellulose &gt; xylan &gt; glucomannan. May participate in lateral root development. The polypeptide is Endoglucanase 2 (GLU5) (Oryza sativa subsp. japonica (Rice)).